The sequence spans 152 residues: UPF0266 membrane protein YobD (152 aa).

3 helical membrane-spanning segments follow: residues 6–26, 45–65, and 67–87; these read LVLI…QFIM, VDSV…VTSH, and AQMT…IFWI.

The protein belongs to the UPF0266 family.

Its subcellular location is the cell inner membrane. This is UPF0266 membrane protein YobD from Salmonella arizonae (strain ATCC BAA-731 / CDC346-86 / RSK2980).